A 441-amino-acid polypeptide reads, in one-letter code: Proline--tRNA ligase (441 aa).

The protein belongs to the class-II aminoacyl-tRNA synthetase family. ProS type 2 subfamily. In terms of assembly, homodimer.

The protein resides in the cytoplasm. It carries out the reaction tRNA(Pro) + L-proline + ATP = L-prolyl-tRNA(Pro) + AMP + diphosphate. Its function is as follows. Catalyzes the attachment of proline to tRNA(Pro) in a two-step reaction: proline is first activated by ATP to form Pro-AMP and then transferred to the acceptor end of tRNA(Pro). In Methylobacterium radiotolerans (strain ATCC 27329 / DSM 1819 / JCM 2831 / NBRC 15690 / NCIMB 10815 / 0-1), this protein is Proline--tRNA ligase.